Consider the following 602-residue polypeptide: Aspartate--tRNA(Asp/Asn) ligase (602 aa).

Glutamate 170 contacts L-aspartate. The aspartate stretch occupies residues glutamine 194–lysine 197. Arginine 216 serves as a coordination point for L-aspartate. ATP contacts are provided by residues arginine 216 to glutamate 218 and glutamine 225. Histidine 448 contributes to the L-aspartate binding site. Position 482 (glutamate 482) interacts with ATP. Arginine 489 contacts L-aspartate. Glycine 534 to arginine 537 is an ATP binding site. Residues glycine 559–lysine 602 are disordered. Positions glutamine 575–lysine 602 are enriched in basic and acidic residues.

Belongs to the class-II aminoacyl-tRNA synthetase family. Type 1 subfamily. As to quaternary structure, homodimer.

The protein resides in the cytoplasm. It catalyses the reaction tRNA(Asx) + L-aspartate + ATP = L-aspartyl-tRNA(Asx) + AMP + diphosphate. In terms of biological role, aspartyl-tRNA synthetase with relaxed tRNA specificity since it is able to aspartylate not only its cognate tRNA(Asp) but also tRNA(Asn). Reaction proceeds in two steps: L-aspartate is first activated by ATP to form Asp-AMP and then transferred to the acceptor end of tRNA(Asp/Asn). The polypeptide is Aspartate--tRNA(Asp/Asn) ligase (Rhodococcus erythropolis (strain PR4 / NBRC 100887)).